A 134-amino-acid chain; its full sequence is Putative pre-16S rRNA nuclease (134 aa).

It belongs to the YqgF nuclease family.

The protein resides in the cytoplasm. Could be a nuclease involved in processing of the 5'-end of pre-16S rRNA. The polypeptide is Putative pre-16S rRNA nuclease (Helicobacter pylori (strain Shi470)).